The following is a 368-amino-acid chain: Germination protease (368 aa).

The propeptide occupies 1–16 (MEKKKLDLSQYAVRTD).

This sequence belongs to the peptidase A25 family. In terms of assembly, homotetramer. Autoproteolytically processed. The inactive tetrameric zymogen termed p46 autoprocesses to a smaller form termed p41, which is active only during spore germination.

The enzyme catalyses Endopeptidase action with P4 Glu or Asp, P1 preferably Glu &gt; Asp, P1' hydrophobic and P2' Ala.. In terms of biological role, initiates the rapid degradation of small, acid-soluble proteins during spore germination. The sequence is that of Germination protease from Bacillus licheniformis (strain ATCC 14580 / DSM 13 / JCM 2505 / CCUG 7422 / NBRC 12200 / NCIMB 9375 / NCTC 10341 / NRRL NRS-1264 / Gibson 46).